Consider the following 188-residue polypeptide: Peptide deformylase (188 aa).

C94 and H136 together coordinate Fe cation. E137 is a catalytic residue. Residue H140 participates in Fe cation binding.

Belongs to the polypeptide deformylase family. The cofactor is Fe(2+).

It catalyses the reaction N-terminal N-formyl-L-methionyl-[peptide] + H2O = N-terminal L-methionyl-[peptide] + formate. Removes the formyl group from the N-terminal Met of newly synthesized proteins. Requires at least a dipeptide for an efficient rate of reaction. N-terminal L-methionine is a prerequisite for activity but the enzyme has broad specificity at other positions. The protein is Peptide deformylase of Chlorobium phaeobacteroides (strain DSM 266 / SMG 266 / 2430).